A 101-amino-acid polypeptide reads, in one-letter code: DNA-directed RNA polymerase subunit beta (101 aa).

Positions 74–101 (KRRLSALGPGGLSRERAGLEVRDVHSSH) are disordered. The segment covering 86–101 (SRERAGLEVRDVHSSH) has biased composition (basic and acidic residues).

Belongs to the RNA polymerase beta chain family. As to quaternary structure, the RNAP catalytic core consists of 2 alpha, 1 beta, 1 beta' and 1 omega subunit. When a sigma factor is associated with the core the holoenzyme is formed, which can initiate transcription.

It catalyses the reaction RNA(n) + a ribonucleoside 5'-triphosphate = RNA(n+1) + diphosphate. Its function is as follows. DNA-dependent RNA polymerase catalyzes the transcription of DNA into RNA using the four ribonucleoside triphosphates as substrates. This chain is DNA-directed RNA polymerase subunit beta (rpoB), found in Mycolicibacterium peregrinum (Mycobacterium peregrinum).